A 171-amino-acid polypeptide reads, in one-letter code: UPF0398 protein stu0232 (171 aa).

It belongs to the UPF0398 family.

The protein is UPF0398 protein stu0232 of Streptococcus thermophilus (strain ATCC BAA-250 / LMG 18311).